A 204-amino-acid polypeptide reads, in one-letter code: Large ribosomal subunit protein bL25 (204 aa).

The disordered stretch occupies residues 1 to 20 (MSETYELKAETRDRVGKGSS).

It belongs to the bacterial ribosomal protein bL25 family. CTC subfamily. In terms of assembly, part of the 50S ribosomal subunit; part of the 5S rRNA/L5/L18/L25 subcomplex. Contacts the 5S rRNA. Binds to the 5S rRNA independently of L5 and L18.

This is one of the proteins that binds to the 5S RNA in the ribosome where it forms part of the central protuberance. In Rhizobium meliloti (strain 1021) (Ensifer meliloti), this protein is Large ribosomal subunit protein bL25.